We begin with the raw amino-acid sequence, 135 residues long: CDGSH iron-sulfur domain-containing protein 2B (135 aa).

Over 1–37 (MMLESLARVFKVQLPAYLKRLPIPDSIAGFIRLTVLE) the chain is Lumenal. Residues 38-60 (WLRLLPFLGVLALLGYLAIRPFL) traverse the membrane as a helical segment. At 61-135 (PKKKQQKDSL…GPLILKKKEV (75 aa)) the chain is on the cytoplasmic side. The [2Fe-2S] cluster site is built by C99, C101, C110, and H114.

Belongs to the CISD protein family. CISD2 subfamily. As to quaternary structure, homodimer. The cofactor is [2Fe-2S] cluster.

The protein localises to the endoplasmic reticulum membrane. It is found in the mitochondrion outer membrane. Its function is as follows. Regulator of autophagy that contributes to antagonize becn1-mediated cellular autophagy at the endoplasmic reticulum. Participates in the interaction of bcl2 with becn1 and is required for bcl2-mediated depression of endoplasmic reticulum Ca(2+) stores during autophagy. The polypeptide is CDGSH iron-sulfur domain-containing protein 2B (cisd2-b) (Xenopus laevis (African clawed frog)).